Here is an 87-residue protein sequence, read N- to C-terminus: Transcription factor ILI4 (87 aa).

The bHLH domain occupies methionine 1–leucine 54.

The protein belongs to the bHLH protein family. As to quaternary structure, interacts with LO9-177. In terms of tissue distribution, expressed in phloem of leaf blades and sheaths, lamina joints, filaments before anthesis, vasculare bundles of the ovule, lemma and palea, and embryos.

The protein resides in the cytoplasm. Its function is as follows. Atypical and probable non DNA-binding bHLH transcription factor that acts as a positive regulator of brassinosteroid (BR) response. Controls lamina inclination by participating in two BR signaling pathways involving BRI1 and RGA1. Involved in the RLI1-dependent modulation of leaf inclination by promoting lamina joint cell elongation, especially in response to phosphate (Pi) availability. This is Transcription factor ILI4 (ILI4) from Oryza sativa subsp. japonica (Rice).